Consider the following 250-residue polypeptide: 2,3-bisphosphoglycerate-dependent phosphoglycerate mutase (250 aa).

Residues 10–17 (RHGESQWN), 23–24 (TG), arginine 62, 89–92 (ERHY), lysine 100, 116–117 (RR), and 185–186 (GN) contribute to the substrate site. The active-site Tele-phosphohistidine intermediate is histidine 11. Glutamate 89 functions as the Proton donor/acceptor in the catalytic mechanism.

It belongs to the phosphoglycerate mutase family. BPG-dependent PGAM subfamily. As to quaternary structure, homodimer.

It carries out the reaction (2R)-2-phosphoglycerate = (2R)-3-phosphoglycerate. It participates in carbohydrate degradation; glycolysis; pyruvate from D-glyceraldehyde 3-phosphate: step 3/5. Functionally, catalyzes the interconversion of 2-phosphoglycerate and 3-phosphoglycerate. The chain is 2,3-bisphosphoglycerate-dependent phosphoglycerate mutase from Yersinia pseudotuberculosis serotype IB (strain PB1/+).